The sequence spans 86 residues: Weak neurotoxin 5 (86 aa).

Residues 1-21 form the signal peptide; it reads MKTLLLTLVVVTIVCLDLGYT. Cystine bridges form between cysteine 24-cysteine 45, cysteine 27-cysteine 32, cysteine 38-cysteine 63, cysteine 67-cysteine 78, and cysteine 79-cysteine 84.

It belongs to the three-finger toxin family. Ancestral subfamily. Orphan group II sub-subfamily. Expressed by the venom gland.

It is found in the secreted. In terms of biological role, binds with low affinity to muscular and very low affinity to neuronal (alpha-7/CHRNA7) nicotinic acetylcholine receptor (nAChR). This chain is Weak neurotoxin 5, found in Naja sputatrix (Malayan spitting cobra).